We begin with the raw amino-acid sequence, 383 residues long: MDWSSYLSRQLSERRSTSLWRQRQVNQKSDGRFLYAADGKYLNFSSNDYLGLSANPAIISAWQRGAEQYGVGSGGSGHITGYTKAHQLLEQQLADWLGYPKALLFISGYSANQGVIAALMTEQDRIIADRLSHASLMEAAMHSPAQLRRFLHNQPESLANLLATPCVGKTLVVTEGVFSMDGDCAPLADIHQQTRISGNWLMVDDAHGIGVCGEQGRGSCWQQKVKPEILIVTFGKAFGLSGAAVLCDEQTAEYLIQYARHLIYSTSMPPAQAQALSEAVRQIQSGDELRQRLQQNINYFRRQAQKLPFNLTDSTTAIQPLIVSDNELSVSLSQSLQQKGIWVKAIRPPTVPPGSARLRITLTASHMPQDIDMLMEALHGFRS.

Arginine 21 serves as a coordination point for substrate. 108-109 (GY) is a pyridoxal 5'-phosphate binding site. Histidine 133 contributes to the substrate binding site. Positions 179, 207, and 233 each coordinate pyridoxal 5'-phosphate. N6-(pyridoxal phosphate)lysine is present on lysine 236. Threonine 350 contacts substrate.

Belongs to the class-II pyridoxal-phosphate-dependent aminotransferase family. BioF subfamily. In terms of assembly, homodimer. Pyridoxal 5'-phosphate serves as cofactor.

It carries out the reaction 6-carboxyhexanoyl-[ACP] + L-alanine + H(+) = (8S)-8-amino-7-oxononanoate + holo-[ACP] + CO2. Its pathway is cofactor biosynthesis; biotin biosynthesis. Functionally, catalyzes the decarboxylative condensation of pimeloyl-[acyl-carrier protein] and L-alanine to produce 8-amino-7-oxononanoate (AON), [acyl-carrier protein], and carbon dioxide. The sequence is that of 8-amino-7-oxononanoate synthase from Photorhabdus laumondii subsp. laumondii (strain DSM 15139 / CIP 105565 / TT01) (Photorhabdus luminescens subsp. laumondii).